We begin with the raw amino-acid sequence, 689 residues long: Methionine--tRNA ligase (689 aa).

A 'HIGH' region motif is present at residues 15 to 25; the sequence is PYANGPIHLGH. Residues cysteine 146, cysteine 149, cysteine 159, and cysteine 162 each coordinate Zn(2+). The short motif at 332–336 is the 'KMSKS' region element; sequence KMSKS. ATP is bound at residue lysine 335. Residues 588 to 689 enclose the tRNA-binding domain; that stretch reads DFAKIDLRIA…EGAQPGMRVK (102 aa).

It belongs to the class-I aminoacyl-tRNA synthetase family. MetG type 1 subfamily. In terms of assembly, homodimer. Zn(2+) serves as cofactor.

It localises to the cytoplasm. It catalyses the reaction tRNA(Met) + L-methionine + ATP = L-methionyl-tRNA(Met) + AMP + diphosphate. Its function is as follows. Is required not only for elongation of protein synthesis but also for the initiation of all mRNA translation through initiator tRNA(fMet) aminoacylation. This chain is Methionine--tRNA ligase, found in Shewanella sp. (strain W3-18-1).